The sequence spans 207 residues: Probable molybdenum cofactor guanylyltransferase (207 aa).

GTP-binding positions include Leu9–Gly11, Lys21, and Asp97. Residue Asp97 coordinates Mg(2+).

It belongs to the MobA family. It depends on Mg(2+) as a cofactor.

It localises to the cytoplasm. The catalysed reaction is Mo-molybdopterin + GTP + H(+) = Mo-molybdopterin guanine dinucleotide + diphosphate. Transfers a GMP moiety from GTP to Mo-molybdopterin (Mo-MPT) cofactor (Moco or molybdenum cofactor) to form Mo-molybdopterin guanine dinucleotide (Mo-MGD) cofactor. This chain is Probable molybdenum cofactor guanylyltransferase, found in Trichormus variabilis (strain ATCC 29413 / PCC 7937) (Anabaena variabilis).